Here is a 327-residue protein sequence, read N- to C-terminus: Peroxidase 15 (327 aa).

The signal sequence occupies residues 1-23; that stretch reads MASFSPLLAMALAIFIFSSHSNA. Glutamine 24 is modified (pyrrolidone carboxylic acid). 4 disulfide bridges follow: cysteine 34/cysteine 115, cysteine 67/cysteine 72, cysteine 121/cysteine 323, and cysteine 200/cysteine 232. N-linked (GlcNAc...) asparagine glycosylation occurs at asparagine 36. The active-site Proton acceptor is the histidine 65. Positions 66, 69, 71, 73, and 75 each coordinate Ca(2+). Residues asparagine 81, asparagine 96, and asparagine 159 are each glycosylated (N-linked (GlcNAc...) asparagine). Proline 163 provides a ligand contact to substrate. N-linked (GlcNAc...) asparagine glycans are attached at residues asparagine 168 and asparagine 171. A heme b-binding site is contributed by histidine 193. Threonine 194 lines the Ca(2+) pocket. 2 N-linked (GlcNAc...) asparagine glycosylation sites follow: asparagine 209 and asparagine 221. Aspartate 245, threonine 248, and aspartate 253 together coordinate Ca(2+). 2 N-linked (GlcNAc...) asparagine glycosylation sites follow: asparagine 287 and asparagine 291.

The protein belongs to the peroxidase family. Classical plant (class III) peroxidase subfamily. Requires Ca(2+) as cofactor. Heme b serves as cofactor.

It is found in the secreted. The enzyme catalyses 2 a phenolic donor + H2O2 = 2 a phenolic radical donor + 2 H2O. Functionally, removal of H(2)O(2), oxidation of toxic reductants, biosynthesis and degradation of lignin, suberization, auxin catabolism, response to environmental stresses such as wounding, pathogen attack and oxidative stress. These functions might be dependent on each isozyme/isoform in each plant tissue. This is Peroxidase 15 from Ipomoea batatas (Sweet potato).